Reading from the N-terminus, the 153-residue chain is Lipoprotein signal peptidase (153 aa).

3 helical membrane passes run 11–31, 39–59, and 68–88; these read ILIL…SLFV, DCID…FAFL, and LVLV…CYAI. Active-site residues include D112 and D129. The chain crosses the membrane as a helical span at residues 122 to 142; that stretch reads FAVFNFADVMIDVAVVWILLL.

The protein belongs to the peptidase A8 family.

It is found in the cell inner membrane. It catalyses the reaction Release of signal peptides from bacterial membrane prolipoproteins. Hydrolyzes -Xaa-Yaa-Zaa-|-(S,diacylglyceryl)Cys-, in which Xaa is hydrophobic (preferably Leu), and Yaa (Ala or Ser) and Zaa (Gly or Ala) have small, neutral side chains.. Its pathway is protein modification; lipoprotein biosynthesis (signal peptide cleavage). Its function is as follows. This protein specifically catalyzes the removal of signal peptides from prolipoproteins. The chain is Lipoprotein signal peptidase from Sulfurimonas denitrificans (strain ATCC 33889 / DSM 1251) (Thiomicrospira denitrificans (strain ATCC 33889 / DSM 1251)).